Reading from the N-terminus, the 769-residue chain is Probable beta-glucosidase M (769 aa).

A signal peptide spans 1–22; that stretch reads MHSNVGLAGLAGLLATASVCLS. Asn28, Asn75, and Asn262 each carry an N-linked (GlcNAc...) asparagine glycan. Residue Asp290 is part of the active site. Asn318, Asn325, Asn396, Asn437, Asn510, Asn546, and Asn625 each carry an N-linked (GlcNAc...) asparagine glycan.

It belongs to the glycosyl hydrolase 3 family.

It localises to the secreted. It carries out the reaction Hydrolysis of terminal, non-reducing beta-D-glucosyl residues with release of beta-D-glucose.. The protein operates within glycan metabolism; cellulose degradation. Beta-glucosidases are one of a number of cellulolytic enzymes involved in the degradation of cellulosic biomass. Catalyzes the last step releasing glucose from the inhibitory cellobiose. The chain is Probable beta-glucosidase M (bglM) from Aspergillus fumigatus (strain CBS 144.89 / FGSC A1163 / CEA10) (Neosartorya fumigata).